The primary structure comprises 885 residues: Pyruvate, phosphate dikinase (885 aa).

The segment at 1–342 (MQRVYAFEDG…LYMLQTRNGK (342 aa)) is N-terminal. An ATP-binding site is contributed by R91. A linker 1 region spans residues 343–399 (MNATATVRTGVDMVEEGLITKEQAIMRIAPQSVDQLLHKNMPANYAEAPLVKGLPAS). The tract at residues 400-497 (PGAATGAVVF…EVHEGDILTI (98 aa)) is central. Residue H454 is the Tele-phosphohistidine intermediate of the active site. The segment at 498–533 (DGSTGCVYKGEVPLEEPQVGSGYFGTILKWANEIKK) is linker 2. Residues 534-885 (IGVFANADLP…QAQIRHPREN (352 aa)) form a C-terminal region. Positions 561, 617, 752, 773, 774, 775, and 776 each coordinate substrate. E752 provides a ligand contact to Mg(2+). Position 776 (D776) interacts with Mg(2+). C839 functions as the Proton donor in the catalytic mechanism.

Belongs to the PEP-utilizing enzyme family. Homodimer. Requires Mg(2+) as cofactor.

The catalysed reaction is pyruvate + phosphate + ATP = phosphoenolpyruvate + AMP + diphosphate + H(+). Functionally, catalyzes the dephosphorylation of phosphoenolpyruvate and diphosphate to produce ATP. The protein is Pyruvate, phosphate dikinase of Entamoeba histolytica (strain ATCC 30459 / HM-1:IMSS / ABRM).